A 163-amino-acid chain; its full sequence is Peptidyl-prolyl cis-trans isomerase FKBP15-2 (163 aa).

Residues 1-25 form the signal peptide; the sequence is MASKMSLRYSLFLIFFSLISLQGFA. Residues 52-140 enclose the PPIase FKBP-type domain; that stretch reads GDTIKVHYRG…IFDTELIAVN (89 aa). A disordered region spans residues 142-163; sequence KPAGGEEYGGDEDDEGYGNDEL. A compositionally biased stretch (acidic residues) spans 149–163; that stretch reads YGGDEDDEGYGNDEL. The Prevents secretion from ER signature appears at 160 to 163; that stretch reads NDEL.

The protein belongs to the FKBP-type PPIase family.

It localises to the endoplasmic reticulum lumen. The enzyme catalyses [protein]-peptidylproline (omega=180) = [protein]-peptidylproline (omega=0). PPIases accelerate the folding of proteins. It catalyzes the cis-trans isomerization of proline imidic peptide bonds in oligopeptides. The chain is Peptidyl-prolyl cis-trans isomerase FKBP15-2 (FKBP15-2) from Arabidopsis thaliana (Mouse-ear cress).